We begin with the raw amino-acid sequence, 661 residues long: CD180 antigen (661 aa).

A signal peptide spans 1 to 20; the sequence is MAPDISCFFLVALFLASCRA. Over 21–626 the chain is Extracellular; sequence TTSSDQKCIE…RLSDVTLSCS (606 aa). One can recognise an LRRNT domain in the interval 33 to 53; that stretch reads VNKTYNCENLGLNEIPGTLPN. N-linked (GlcNAc...) asparagine glycosylation is found at Asn34, Asn53, Asn70, and Asn78. 7 LRR repeats span residues 54-75, 78-99, 102-123, 126-147, 150-171, 174-195, and 201-221; these read STEC…TFSR, NLTF…TFQS, RLDT…ALSG, ALKH…PLHN, TLES…KGFP, KLKV…DMSS, and NLSL…AFDS. Residues Asn201, Asn244, and Asn288 are each glycosylated (N-linked (GlcNAc...) asparagine). 5 LRR repeats span residues 275 to 296, 299 to 321, 322 to 343, 346 to 366, and 371 to 391; these read SVES…TFHC, GLQE…VGLS, TLKK…SASN, SLTH…TGCL, and NLRE…CNLQ. N-linked (GlcNAc...) asparagine glycans are attached at residues Asn394 and Asn402. LRR repeat units follow at residues 397-418, 421-442, 446-466, 470-493, 497-518, 521-544, and 546-566; these read HLQS…AFKE, QLEL…SPFQ, LLKV…QLFD, ALQH…NSLQ, RLEI…AFTS, MMNH…SHLK, and IYLN…LPIL. Asn451 carries N-linked (GlcNAc...) asparagine glycosylation. The region spanning 577 to 627 is the LRRCT domain; that stretch reads NPLDCTCSNIYFLEWYKENMQKLEDTEDTLCENPPLLRGVRLSDVTLSCSM. A helical transmembrane segment spans residues 627–650; sequence MAAVGIFFLIVFLLVFAILLIFAV. Over 651–661 the chain is Cytoplasmic; it reads KYFLRWKYQHI.

It belongs to the Toll-like receptor family. In terms of assembly, M-shaped tetramer of two CD180-LY86 heterodimers. As to expression, B-lymphocytes and spleen. Not detected in thymus, kidney, muscle, heart, brain or liver.

The protein resides in the cell membrane. May cooperate with MD-1 and TLR4 to mediate the innate immune response to bacterial lipopolysaccharide (LPS) in B-cells. Leads to NF-kappa-B activation. Also involved in the life/death decision of B-cells. This chain is CD180 antigen (Cd180), found in Mus musculus (Mouse).